A 1228-amino-acid chain; its full sequence is DNA-directed RNA polymerase subunit beta (1228 aa).

Residues 1175–1204 (ESVDEDEQPQGLGAFEIGGDEIEEDKEDDK) are disordered. Positions 1192-1202 (GGDEIEEDKED) are enriched in acidic residues.

This sequence belongs to the RNA polymerase beta chain family. In terms of assembly, the RNAP catalytic core consists of 2 alpha, 1 beta, 1 beta' and 1 omega subunit. When a sigma factor is associated with the core the holoenzyme is formed, which can initiate transcription.

The catalysed reaction is RNA(n) + a ribonucleoside 5'-triphosphate = RNA(n+1) + diphosphate. DNA-dependent RNA polymerase catalyzes the transcription of DNA into RNA using the four ribonucleoside triphosphates as substrates. The polypeptide is DNA-directed RNA polymerase subunit beta (Caldicellulosiruptor bescii (strain ATCC BAA-1888 / DSM 6725 / KCTC 15123 / Z-1320) (Anaerocellum thermophilum)).